The following is a 221-amino-acid chain: Glutathione peroxidase 6 (221 aa).

The first 19 residues, 1–19 (MAQKLWGSCLFSLFMAALA), serve as a signal peptide directing secretion. Cys73 is an active-site residue.

This sequence belongs to the glutathione peroxidase family.

The protein resides in the secreted. It carries out the reaction 2 glutathione + H2O2 = glutathione disulfide + 2 H2O. This Mus musculus (Mouse) protein is Glutathione peroxidase 6 (Gpx6).